The sequence spans 156 residues: Protein-export protein SecB (156 aa).

Belongs to the SecB family. As to quaternary structure, homotetramer, a dimer of dimers. One homotetramer interacts with 1 SecA dimer.

It localises to the cytoplasm. Its function is as follows. One of the proteins required for the normal export of preproteins out of the cell cytoplasm. It is a molecular chaperone that binds to a subset of precursor proteins, maintaining them in a translocation-competent state. It also specifically binds to its receptor SecA. In Aeromonas hydrophila subsp. hydrophila (strain ATCC 7966 / DSM 30187 / BCRC 13018 / CCUG 14551 / JCM 1027 / KCTC 2358 / NCIMB 9240 / NCTC 8049), this protein is Protein-export protein SecB.